The chain runs to 364 residues: Aminomethyltransferase (364 aa).

It belongs to the GcvT family. As to quaternary structure, the glycine cleavage system is composed of four proteins: P, T, L and H.

The enzyme catalyses N(6)-[(R)-S(8)-aminomethyldihydrolipoyl]-L-lysyl-[protein] + (6S)-5,6,7,8-tetrahydrofolate = N(6)-[(R)-dihydrolipoyl]-L-lysyl-[protein] + (6R)-5,10-methylene-5,6,7,8-tetrahydrofolate + NH4(+). In terms of biological role, the glycine cleavage system catalyzes the degradation of glycine. The sequence is that of Aminomethyltransferase from Thermotoga maritima (strain ATCC 43589 / DSM 3109 / JCM 10099 / NBRC 100826 / MSB8).